Consider the following 1527-residue polypeptide: Peroxidasin (1527 aa).

A signal peptide spans 1–23 (MRFMLLMLQLLGLLLLLAGGVQS). An LRRNT domain is found at 24 to 53 (VYCPAGCTCLERTVRCIRAKLSAVPKLPQD). LRR repeat units lie at residues 51 to 74 (PQDT…AFSG), 75 to 98 (LAQL…ALNG), 99 to 122 (LTAL…IFQR), 124 to 146 (PRLE…LFDN), 147 to 170 (LPRL…GFNR), and 172 to 196 (NNLK…LWRR). Ig-like C2-type domains lie at 236–322 (PQFL…QPVR), 365–453 (PHFT…ARIE), 458–545 (PEIL…ATIK), and 553–643 (PQLA…ALVT). 4 disulfides stabilise this stretch: C257-C307, C388-C437, C479-C529, and C574-C627. N-linked (GlcNAc...) asparagine glycosylation occurs at N419. Residues N616, N673, N682, N731, and N767 are each glycosylated (N-linked (GlcNAc...) asparagine). A disulfide bridge links C768 with C784. D862 contributes to the heme b binding site. H863 functions as the Proton acceptor in the catalytic mechanism. Position 864 (D864) interacts with Ca(2+). Disulfide bonds link C882-C892 and C886-C909. Residues T941, Y943, D945, and S947 each contribute to the Ca(2+) site. An N-linked (GlcNAc...) asparagine glycan is attached at N962. Cysteines 994 and 1005 form a disulfide. Residues E1015 and H1109 each contribute to the heme b site. N-linked (GlcNAc...) asparagine glycans are attached at residues N1120 and N1213. Cystine bridges form between C1212–C1269 and C1310–C1336. Positions 1403-1441 (NEERVSGLEELIGSFQKELKKLHKKLRKLEDSCNSADSE) form a coiled coil. Residues 1463 to 1524 (SHCVDDKGTT…PPEACCPHCP (62 aa)) enclose the VWFC domain.

The protein belongs to the peroxidase family. XPO subfamily. As to quaternary structure, homotrimer; disulfide-linked. Requires Ca(2+) as cofactor. It depends on heme b as a cofactor. As to expression, expressed in hemocytes. Also expressed in the fat body and gastric caeca.

The protein resides in the secreted. It catalyses the reaction (5R)-5-hydroxy-L-lysyl-[collagen] + L-methionyl-[collagen] + H2O2 = [collagen]-(5R)-5-hydroxy-L-lysyl-N-S-L-methionyl-[collagen] + 2 H2O + H(+). It carries out the reaction bromide + H2O2 = hypobromite + H2O. The catalysed reaction is (5R)-5-hydroxy-L-lysyl-[collagen] + L-methionyl-[collagen] + hypobromite = [collagen]-(5R)-5-hydroxy-L-lysyl-N-S-L-methionyl-[collagen] + bromide + H2O + H(+). The enzyme catalyses L-lysyl-[collagen] + L-methionyl-[collagen] + H2O2 = [collagen]-L-lysyl-N-S-L-methionyl-[collagen] + 2 H2O + H(+). It catalyses the reaction L-lysyl-[collagen] + L-methionyl-[collagen] + hypobromite = [collagen]-L-lysyl-N-S-L-methionyl-[collagen] + bromide + H2O + H(+). It carries out the reaction L-tyrosyl-[protein] + bromide + H2O2 + H(+) = 3-bromo-L-tyrosyl-[protein] + 2 H2O. The catalysed reaction is hypobromite + L-tyrosyl-[protein] + H(+) = 3-bromo-L-tyrosyl-[protein] + H2O. Its function is as follows. Catalyzes the two-electron oxidation of bromide by hydrogen peroxide and generates hypobromite as a reactive intermediate which mediates the formation of sulfilimine cross-links between methionine and hydroxylysine residues within an uncross-linked collagen IV NC1 hexamer. Plays a role in extracellular matrix consolidation, phagocytosis and defense. The sequence is that of Peroxidasin from Drosophila melanogaster (Fruit fly).